Reading from the N-terminus, the 367-residue chain is Pre-small/secreted glycoprotein (367 aa).

The signal sequence occupies residues 1 to 33 (MGSGYQLLQLPRERFRKTSFLVWVIILFQRAIS). Asn41 carries an N-linked (GlcNAc...) asparagine; by host glycan. Intrachain disulfides connect Cys109–Cys136 and Cys122–Cys148. N-linked (GlcNAc...) asparagine; by host glycans are attached at residues Asn205, Asn239, Asn258, and Asn269.

It belongs to the filoviruses glycoprotein family. In terms of assembly, homodimer; disulfide-linked. The homodimers are linked by two disulfide bonds in a parallel orientation. As to quaternary structure, monomer. In terms of processing, this precursor is processed into mature sGP and delta-peptide by host furin or furin-like proteases. The cleavage site corresponds to the furin optimal cleavage sequence [KR]-X-[KR]-R. N-glycosylated. Post-translationally, O-glycosylated.

The protein resides in the secreted. Functionally, seems to possess an anti-inflammatory activity as it can reverse the barrier-decreasing effects of TNF alpha. Might therefore contribute to the lack of inflammatory reaction seen during infection in spite the of extensive necrosis and massive virus production. Does not seem to be involved in activation of primary macrophages. Does not seem to interact specifically with neutrophils. Viroporin that permeabilizes mammalian cell plasma membranes. It acts by altering permeation of ionic compounds and small molecules. This activity may lead to viral enterotoxic activity. The polypeptide is Pre-small/secreted glycoprotein (GP) (Reston ebolavirus (strain Philippines-96) (REBOV)).